A 430-amino-acid chain; its full sequence is Elongation factor 1-alpha (430 aa).

One can recognise a tr-type G domain in the interval Lys7–Val219. The interval Gly16–Ser23 is G1. Gly16–Ser23 serves as a coordination point for GTP. Residue Ser23 coordinates Mg(2+). Residues Gly70–Asp74 are G2. Positions Asp91–Gly94 are G3. Residues Asp91 to His95 and Asn146 to Asp149 contribute to the GTP site. Residues Asn146 to Asp149 are G4. Positions Ser183–Trp185 are G5.

It belongs to the TRAFAC class translation factor GTPase superfamily. Classic translation factor GTPase family. EF-Tu/EF-1A subfamily.

It is found in the cytoplasm. It catalyses the reaction GTP + H2O = GDP + phosphate + H(+). Functionally, GTP hydrolase that promotes the GTP-dependent binding of aminoacyl-tRNA to the A-site of ribosomes during protein biosynthesis. The polypeptide is Elongation factor 1-alpha (Pyrococcus woesei).